Reading from the N-terminus, the 766-residue chain is Flocculation suppression protein (766 aa).

Disordered stretches follow at residues 1–52 (MSEE…HGSK), 129–181 (HDHS…PTKI), 203–247 (KRRA…SSNS), 547–619 (KPVP…SISG), and 657–766 (SVTP…KVKM). 2 stretches are compositionally biased toward low complexity: residues 8-19 (SAPAPASTPAPA) and 134-147 (NDANSGDDANTNDD). The DNA-binding element occupies 64-186 (IFIHKLYQIL…NPTKIWEFKH (123 aa)). The span at 171–181 (QEKEKSNPTKI) shows a compositional bias: basic and acidic residues. The span at 208–224 (SRNNSSINSRKNSSNQN) shows a compositional bias: low complexity. The residue at position 220 (serine 220) is a Phosphoserine. The segment covering 236–247 (SSIQDPSTSSNS) has biased composition (polar residues). Serine 556 carries the phosphoserine modification. Polar residues predominate over residues 679 to 699 (AVSSNLINSPMNVEHSSSLSQ). Low complexity predominate over residues 708 to 719 (LPQPSLPTTSTT). Serine 733 bears the Phosphoserine mark. Over residues 738–750 (LLNQEDSSTSSAD) the composition is skewed to polar residues.

In the N-terminal section; belongs to the HSF family.

Its subcellular location is the nucleus. Functionally, involved in cell surface assembly and regulation of the gene related to flocculation (asexual cell aggregation). Mutations in SFL1 causes constitutive cell aggregation. The sequence is that of Flocculation suppression protein (SFL1) from Saccharomyces cerevisiae (strain ATCC 204508 / S288c) (Baker's yeast).